We begin with the raw amino-acid sequence, 147 residues long: Ubiquitin-conjugating enzyme E2 5A (147 aa).

A compositionally biased stretch (basic and acidic residues) spans 1 to 15 (MASKRIQKELKDLQK). Residues 1–24 (MASKRIQKELKDLQKDPPTSCSAG) form a disordered region. Positions 1-147 (MASKRIQKEL…ARTWTQRYAM (147 aa)) constitute a UBC core domain. The active-site Glycyl thioester intermediate is the Cys-85.

This sequence belongs to the ubiquitin-conjugating enzyme family.

It catalyses the reaction S-ubiquitinyl-[E1 ubiquitin-activating enzyme]-L-cysteine + [E2 ubiquitin-conjugating enzyme]-L-cysteine = [E1 ubiquitin-activating enzyme]-L-cysteine + S-ubiquitinyl-[E2 ubiquitin-conjugating enzyme]-L-cysteine.. Its pathway is protein modification; protein ubiquitination. Its function is as follows. E2 conjugating enzyme that associates with the E3 ubiquitin-protein ligase EL5 to mediate ubiquitination of target proteins. The sequence is that of Ubiquitin-conjugating enzyme E2 5A (UBC5A) from Oryza sativa subsp. japonica (Rice).